Consider the following 367-residue polypeptide: Glutamate 5-kinase (367 aa).

Lysine 9 provides a ligand contact to ATP. Substrate is bound by residues serine 49, aspartate 136, and asparagine 148. Residues 168–169 (TD) and 210–216 (TGGMKSK) each bind ATP. One can recognise a PUA domain in the interval 276 to 350 (SGQIEIDAGA…GMQSQHIQAR (75 aa)).

It belongs to the glutamate 5-kinase family.

It localises to the cytoplasm. The catalysed reaction is L-glutamate + ATP = L-glutamyl 5-phosphate + ADP. The protein operates within amino-acid biosynthesis; L-proline biosynthesis; L-glutamate 5-semialdehyde from L-glutamate: step 1/2. Catalyzes the transfer of a phosphate group to glutamate to form L-glutamate 5-phosphate. In Bacillus cereus (strain ZK / E33L), this protein is Glutamate 5-kinase.